The primary structure comprises 291 residues: Shikimate dehydrogenase (NADP(+)) (291 aa).

Shikimate is bound by residues 23-25 (SFS) and threonine 70. The active-site Proton acceptor is the lysine 74. Shikimate-binding residues include asparagine 95 and aspartate 110. NADP(+) is bound by residues 135-139 (GAGGA) and leucine 232. Tyrosine 234 serves as a coordination point for shikimate. Residue glycine 255 coordinates NADP(+).

It belongs to the shikimate dehydrogenase family. As to quaternary structure, homodimer.

The enzyme catalyses shikimate + NADP(+) = 3-dehydroshikimate + NADPH + H(+). It participates in metabolic intermediate biosynthesis; chorismate biosynthesis; chorismate from D-erythrose 4-phosphate and phosphoenolpyruvate: step 4/7. Involved in the biosynthesis of the chorismate, which leads to the biosynthesis of aromatic amino acids. Catalyzes the reversible NADPH linked reduction of 3-dehydroshikimate (DHSA) to yield shikimate (SA). This chain is Shikimate dehydrogenase (NADP(+)), found in Desulforamulus reducens (strain ATCC BAA-1160 / DSM 100696 / MI-1) (Desulfotomaculum reducens).